The following is a 384-amino-acid chain: V-type proton ATPase subunit C 2 (384 aa).

This sequence belongs to the V-ATPase C subunit family. V-ATPase is a heteromultimeric enzyme made up of two complexes: the ATP-hydrolytic V1 complex and the proton translocation V0 complex. The V1 complex consists of three catalytic AB heterodimers that form a heterohexamer, three peripheral stalks each consisting of EG heterodimers, one central rotor including subunits D and F, and the regulatory subunits C and H. The proton translocation complex V0 consists of the proton transport subunit a, a ring of proteolipid subunits c9c'', rotary subunit d, subunits e and f, and the accessory subunits vah-19/Ac45 and vah-20/PRR.

Its function is as follows. Subunit of the V1 complex of vacuolar(H+)-ATPase (V-ATPase), a multisubunit enzyme composed of a peripheral complex (V1) that hydrolyzes ATP and a membrane integral complex (V0) that translocates protons. V-ATPase is responsible for acidifying and maintaining the pH of intracellular compartments and in some cell types, is targeted to the plasma membrane, where it is responsible for acidifying the extracellular environment. Subunit C is necessary for the assembly of the catalytic sector of the enzyme and is likely to have a specific function in its catalytic activity. The polypeptide is V-type proton ATPase subunit C 2 (VATC) (Ascidia sydneiensis samea (Vanadium-rich ascidian)).